The following is a 422-amino-acid chain: GTPase Obg (422 aa).

Positions 1–158 (MFYDRAKIYV…LWLELELKVI (158 aa)) constitute an Obg domain. Positions 159–330 (ADVGLIGFPN…VIHRVAELLA (172 aa)) constitute an OBG-type G domain. Residues 165–172 (GFPNAGKS), 190–194 (FTTLV), 212–215 (DIPG), 282–285 (NKMD), and 311–313 (SAA) each bind GTP. Mg(2+)-binding residues include serine 172 and threonine 192. An OCT domain is found at 344–422 (VMFEPEERFN…IGDWEFEWSE (79 aa)).

This sequence belongs to the TRAFAC class OBG-HflX-like GTPase superfamily. OBG GTPase family. Monomer. Mg(2+) serves as cofactor.

The protein resides in the cytoplasm. An essential GTPase which binds GTP, GDP and possibly (p)ppGpp with moderate affinity, with high nucleotide exchange rates and a fairly low GTP hydrolysis rate. Plays a role in control of the cell cycle, stress response, ribosome biogenesis and in those bacteria that undergo differentiation, in morphogenesis control. The protein is GTPase Obg of Desulforamulus reducens (strain ATCC BAA-1160 / DSM 100696 / MI-1) (Desulfotomaculum reducens).